A 555-amino-acid chain; its full sequence is Transcriptional adapter 2b (555 aa).

The ZZ-type zinc finger occupies 8–63 (FTKYNCTNCQDDIQGIRVHCAECENFDLCLQCFAAGAEIGAHQNNHSYQFMDTGTS). Residues Cys-13, Cys-16, Cys-27, Cys-30, Cys-36, Cys-39, His-49, and His-53 each coordinate Zn(2+). The region spanning 69-121 (RGKGAWTAREEIRLLDAIEQYGFGNWEDISKHIETKSAEDAKEEYVNKFVNGT) is the SANT domain. The segment at 318 to 372 (THRSTGPYGHGKTDHTHTSNGSHRPPSSSLHSPQPNLRKVEMSSGGEASSNSIAP) is disordered. The span at 339–352 (SHRPPSSSLHSPQP) shows a compositional bias: low complexity. Residues 363 to 372 (GEASSNSIAP) are compositionally biased toward polar residues.

As to quaternary structure, component of histone acetyltransferase complexes containing Gcn5 and Ada3. In terms of assembly, can heterooligomerize with Isoform A. Component of the Spt-Ada-Gcn5 acetyltransferase (SAGA) complex consisting of Ada1, Ada2b (Isoform B), Ada3, wda, Saf6, Spt3, Spt7, Spt20, Taf9, Taf10b, Taf12, Nipped-A/Tra1, Sf3b3, Sf3b5, not/nonstop, Sgf11, Sgf29, e(y)2, Atxn7 and Gcn5. Taf5 and Taf10, which has partially redundant properties with Taf10b, may also be part of this complex. Interacts (via C-terminus) with Spt3 and Taf12; the interactions are direct. Interacts with Ada3; the interaction is probably direct. May also interact directly with Spt7 and Gcn5. Interacts with p53. Can heterooligomerize with Isoform B. Component of the Chiffon histone acetyltransferase (CHAT) complex consisting of Ada3, Sgf29, Gcn5, chif/chiffon and Ada2b (Isoform A). Interacts (via N-terminus) with Gcn5 and Ada3; the interaction is direct. Can interact directly with Spt7 in vitro but in vivo this interaction is not stable probably due to the absence of other SAGA components. Interacts with p53. Expressed in nurse cells of stage 10 egg chambers and transcripts are dumped into the oocyte when nurse cells degenerate at late oogenesis.

The protein localises to the nucleus. Its function is as follows. Component of several Gcn5-containing histone acetyltransferase complexes that regulate nucleosome organization; involved in acetylation of histone H3, particularly on Lys-10 (H3K9ac) and Lys-15 (H3K14ac). Regulates the transcription of a subset of genes during development; affects recruitment of RNA polymerase II. May be involved in the function of some acidic activation domains, which activate transcription at distant sites. Involved in the p53-dependent apoptosis pathway response to DNA damage by genotoxic agents. Component of the SAGA histone acetyltransferase complex, which predominantly acetylates histone H3. Functionally, component of the CHAT histone acetyltransferase complex, which predominantly acetylates histone H3. The sequence is that of Transcriptional adapter 2b from Drosophila melanogaster (Fruit fly).